A 283-amino-acid polypeptide reads, in one-letter code: Phospholipid phosphatase 1 (283 aa).

At 1–6 (MFDKTR) the chain is on the cytoplasmic side. Positions 5 to 7 (TRL) match the PDZ-binding; involved in localization to the apical cell membrane motif. The helical transmembrane segment at 7-27 (LPYVALDVICVLLAGLPFAIL) threads the bilayer. Residues 28-53 (TSRHTPFQRGIFCNDDSIKYPYKEDT) are Extracellular-facing. The helical transmembrane segment at 54–74 (IPYALLGGIVIPFCIIVMSIG) threads the bilayer. Topologically, residues 75–88 (ESLSVYFNVLHSNS) are cytoplasmic. A helical membrane pass occupies residues 89–109 (FVGNPYIATIYKAVGAFLFGV). Residues 110–164 (SASQSLTDIAKYTIGSLRPHFLAICNPDWSKINCSDGYIEDYICQGNEEKVKEGR) lie on the Extracellular side of the membrane. The interval 120 to 128 (KYTIGSLRP) is phosphatase sequence motif I. Asn-142 carries an N-linked (GlcNAc...) asparagine glycan. A helical transmembrane segment spans residues 165-185 (LSFYSGHSSFSMYCMLFVALY). The interval 168 to 171 (YSGH) is phosphatase sequence motif II. His-171 functions as the Proton donors in the catalytic mechanism. Topologically, residues 186–199 (LQARMKGDWARLLR) are cytoplasmic. Residues 200–220 (PMLQFGLIAFSIYVGLSRVSD) traverse the membrane as a helical segment. Positions 216–227 (SRVSDYKHHWSD) are phosphatase sequence motif III. The Extracellular segment spans residues 221–229 (YKHHWSDVT). His-223 acts as the Nucleophile in catalysis. A helical membrane pass occupies residues 230-250 (VGLIQGAAMAILVALYVSDFF). Over 251-283 (KDTHSYKERKEEDPHTTLHETASSRNYSTNHEP) the chain is Cytoplasmic. The segment at 260 to 283 (KEEDPHTTLHETASSRNYSTNHEP) is disordered. Positions 269–283 (HETASSRNYSTNHEP) are enriched in polar residues.

The protein belongs to the PA-phosphatase related phosphoesterase family. In terms of assembly, forms functional homodimers and homooligomers that are not required for substrate recognition and catalytic activity. Can also form heterooligomers with PLPP2 and PLPP3. Post-translationally, N-glycosylated. N-linked sugars are of the complex type. N-glycosylation is not required for the phosphatase activity. As to expression, widely expressed. Highly expressed in kidney and lung. Almost undetectable in brain, heart, bone, muscle or spleen.

Its subcellular location is the cell membrane. It is found in the apical cell membrane. The protein localises to the membrane raft. It localises to the membrane. The protein resides in the caveola. The catalysed reaction is a 1,2-diacyl-sn-glycero-3-phosphate + H2O = a 1,2-diacyl-sn-glycerol + phosphate. It catalyses the reaction 1,2-dihexadecanoyl-sn-glycero-3-phosphate + H2O = 1,2-dihexadecanoyl-sn-glycerol + phosphate. The enzyme catalyses 1,2-di-(9Z-octadecenoyl)-sn-glycero-3-phosphate + H2O = 1,2-di-(9Z-octadecenoyl)-sn-glycerol + phosphate. It carries out the reaction a monoacyl-sn-glycero-3-phosphate + H2O = a monoacylglycerol + phosphate. The catalysed reaction is (9Z)-octadecenoyl-sn-glycero-3-phosphate + H2O = (9Z-octadecenoyl)-glycerol + phosphate. It catalyses the reaction a 1-acyl-sn-glycero-3-phosphate + H2O = a 1-acyl-sn-glycerol + phosphate. The enzyme catalyses 1-(9Z-octadecenoyl)-sn-glycero-3-phosphate + H2O = 1-(9Z-octadecenoyl)-sn-glycerol + phosphate. It carries out the reaction a 1,2-diacyl-sn-glycerol 3-diphosphate + H2O = a 1,2-diacyl-sn-glycero-3-phosphate + phosphate + H(+). The catalysed reaction is sphing-4-enine 1-phosphate + H2O = sphing-4-enine + phosphate. It catalyses the reaction an N-acylsphing-4-enine 1-phosphate + H2O = an N-acylsphing-4-enine + phosphate. The enzyme catalyses N-(octanoyl)-sphing-4-enine-1-phosphate + H2O = N-octanoylsphing-4-enine + phosphate. It carries out the reaction N-(9Z-octadecenoyl)-ethanolamine phosphate + H2O = N-(9Z-octadecenoyl) ethanolamine + phosphate. The catalysed reaction is 1-hexadecanoyl-2-(9Z-octadecenoyl)-sn-glycero-3-phosphate + H2O = 1-hexadecanoyl-2-(9Z-octadecenoyl)-sn-glycerol + phosphate. The protein operates within lipid metabolism; phospholipid metabolism. Its activity is regulated as follows. Magnesium-independent phospholipid phosphatase. Insensitive to N-ethylmaleimide. Magnesium-independent phospholipid phosphatase of the plasma membrane that catalyzes the dephosphorylation of a variety of glycerolipid and sphingolipid phosphate esters including phosphatidate/PA, lysophosphatidate/LPA, diacylglycerol pyrophosphate/DGPP, sphingosine 1-phosphate/S1P and ceramide 1-phosphate/C1P. Also acts on N-oleoyl ethanolamine phosphate/N-(9Z-octadecenoyl)-ethanolamine phosphate, a potential physiological compound. Through its extracellular phosphatase activity allows both the hydrolysis and the cellular uptake of these bioactive lipid mediators from the milieu, regulating signal transduction in different cellular processes. It is for instance essential for the extracellular hydrolysis of S1P and subsequent conversion into intracellular S1P. Involved in the regulation of inflammation, platelets activation, cell proliferation and migration among other processes. May also have an intracellular activity to regulate phospholipid-mediated signaling pathways. The sequence is that of Phospholipid phosphatase 1 from Mus musculus (Mouse).